We begin with the raw amino-acid sequence, 102 residues long: NADH-quinone oxidoreductase subunit K 1 (102 aa).

A run of 3 helical transmembrane segments spans residues L5–V25, I30–G50, and V62–V82.

Belongs to the complex I subunit 4L family. NDH-1 is composed of 14 different subunits. Subunits NuoA, H, J, K, L, M, N constitute the membrane sector of the complex.

The protein resides in the cell inner membrane. It catalyses the reaction a quinone + NADH + 5 H(+)(in) = a quinol + NAD(+) + 4 H(+)(out). Functionally, NDH-1 shuttles electrons from NADH, via FMN and iron-sulfur (Fe-S) centers, to quinones in the respiratory chain. The immediate electron acceptor for the enzyme in this species is believed to be ubiquinone. Couples the redox reaction to proton translocation (for every two electrons transferred, four hydrogen ions are translocated across the cytoplasmic membrane), and thus conserves the redox energy in a proton gradient. The sequence is that of NADH-quinone oxidoreductase subunit K 1 from Geotalea uraniireducens (strain Rf4) (Geobacter uraniireducens).